We begin with the raw amino-acid sequence, 668 residues long: tRNA 5-methylaminomethyl-2-thiouridine biosynthesis bifunctional protein MnmC (668 aa).

Residues 1 to 245 form a tRNA (mnm(5)s(2)U34)-methyltransferase region; that stretch reads MKHYSIQPAN…KREMLCGVME (245 aa). The segment at 270-668 is FAD-dependent cmnm(5)s(2)U34 oxidoreductase; it reads IGGGIASALL…LLKGKAVKAG (399 aa).

The protein in the N-terminal section; belongs to the methyltransferase superfamily. tRNA (mnm(5)s(2)U34)-methyltransferase family. This sequence in the C-terminal section; belongs to the DAO family. Requires FAD as cofactor.

It is found in the cytoplasm. It catalyses the reaction 5-aminomethyl-2-thiouridine(34) in tRNA + S-adenosyl-L-methionine = 5-methylaminomethyl-2-thiouridine(34) in tRNA + S-adenosyl-L-homocysteine + H(+). Functionally, catalyzes the last two steps in the biosynthesis of 5-methylaminomethyl-2-thiouridine (mnm(5)s(2)U) at the wobble position (U34) in tRNA. Catalyzes the FAD-dependent demodification of cmnm(5)s(2)U34 to nm(5)s(2)U34, followed by the transfer of a methyl group from S-adenosyl-L-methionine to nm(5)s(2)U34, to form mnm(5)s(2)U34. This chain is tRNA 5-methylaminomethyl-2-thiouridine biosynthesis bifunctional protein MnmC, found in Escherichia coli O6:H1 (strain CFT073 / ATCC 700928 / UPEC).